A 483-amino-acid chain; its full sequence is 6-phosphogluconate dehydrogenase, decarboxylating 1 (483 aa).

NADP(+)-binding positions include Gly11 to Gly16, Asn34 to Thr36, Val78 to Ala80, and Asn106. Residues Asn106 and Ser132–Gly134 contribute to the substrate site. Lys186 (proton acceptor) is an active-site residue. Residue His189 to Asn190 coordinates substrate. Glu193 (proton donor) is an active-site residue. Positions 194, 264, 291, 454, and 460 each coordinate substrate.

Belongs to the 6-phosphogluconate dehydrogenase family. Homodimer.

It localises to the cytoplasm. The enzyme catalyses 6-phospho-D-gluconate + NADP(+) = D-ribulose 5-phosphate + CO2 + NADPH. Its pathway is carbohydrate degradation; pentose phosphate pathway; D-ribulose 5-phosphate from D-glucose 6-phosphate (oxidative stage): step 3/3. In terms of biological role, catalyzes the oxidative decarboxylation of 6-phosphogluconate to ribulose 5-phosphate and CO(2), with concomitant reduction of NADP to NADPH. This Spinacia oleracea (Spinach) protein is 6-phosphogluconate dehydrogenase, decarboxylating 1 (pgdC).